Reading from the N-terminus, the 242-residue chain is Probable transcriptional regulatory protein XOO1543 (242 aa).

Belongs to the TACO1 family.

Its subcellular location is the cytoplasm. In Xanthomonas oryzae pv. oryzae (strain MAFF 311018), this protein is Probable transcriptional regulatory protein XOO1543.